Consider the following 473-residue polypeptide: Aspartyl/glutamyl-tRNA(Asn/Gln) amidotransferase subunit B (473 aa).

The protein belongs to the GatB/GatE family. GatB subfamily. Heterotrimer of A, B and C subunits.

It catalyses the reaction L-glutamyl-tRNA(Gln) + L-glutamine + ATP + H2O = L-glutaminyl-tRNA(Gln) + L-glutamate + ADP + phosphate + H(+). It carries out the reaction L-aspartyl-tRNA(Asn) + L-glutamine + ATP + H2O = L-asparaginyl-tRNA(Asn) + L-glutamate + ADP + phosphate + 2 H(+). Functionally, allows the formation of correctly charged Asn-tRNA(Asn) or Gln-tRNA(Gln) through the transamidation of misacylated Asp-tRNA(Asn) or Glu-tRNA(Gln) in organisms which lack either or both of asparaginyl-tRNA or glutaminyl-tRNA synthetases. The reaction takes place in the presence of glutamine and ATP through an activated phospho-Asp-tRNA(Asn) or phospho-Glu-tRNA(Gln). In Finegoldia magna (strain ATCC 29328 / DSM 20472 / WAL 2508) (Peptostreptococcus magnus), this protein is Aspartyl/glutamyl-tRNA(Asn/Gln) amidotransferase subunit B.